The chain runs to 199 residues: uncharacterized protein (199 aa).

Residues 72 to 116 (EIYSEIENEESDIEEMSEEMKAFFAKTQEHRQKLKEQRAAEKRKE) are a coiled coil. A compositionally biased stretch (basic and acidic residues) spans 98 to 117 (TQEHRQKLKEQRAAEKRKEG). Positions 98–127 (TQEHRQKLKEQRAAEKRKEGQSSSKSQEEY) are disordered.

This is an uncharacterized protein from Caenorhabditis elegans.